The sequence spans 264 residues: Ribonuclease H (264 aa).

A disordered region spans residues 55-88; that stretch reads GSRYSSSSGPYRRSTTSYGYSPYSSSSSNYSARH. The segment covering 56 to 85 has biased composition (low complexity); the sequence is SRYSSSSGPYRRSTTSYGYSPYSSSSSNYS. At S97 the chain carries Phosphoserine. Residues 120–263 form the RNase H type-1 domain; it reads CSDRQVVYAD…ADMLARRGAS (144 aa). D129, E171, D191, and D255 together coordinate Mg(2+).

This sequence belongs to the RNase H family. Mg(2+) serves as cofactor.

It catalyses the reaction Endonucleolytic cleavage to 5'-phosphomonoester.. Endonuclease that specifically degrades the RNA of RNA-DNA hybrids. The polypeptide is Ribonuclease H (rnh1) (Schizosaccharomyces pombe (strain 972 / ATCC 24843) (Fission yeast)).